The sequence spans 669 residues: Elongation factor G 2 (669 aa).

The tr-type G domain occupies 1 to 276; the sequence is MGIRNIGIMA…SIVDYLPSPF (276 aa). GTP contacts are provided by residues 10 to 17, 74 to 78, and 128 to 131; these read AHIDAGKT, DTPGH, and NKMD.

This sequence belongs to the TRAFAC class translation factor GTPase superfamily. Classic translation factor GTPase family. EF-G/EF-2 subfamily.

The protein resides in the cytoplasm. Functionally, catalyzes the GTP-dependent ribosomal translocation step during translation elongation. During this step, the ribosome changes from the pre-translocational (PRE) to the post-translocational (POST) state as the newly formed A-site-bound peptidyl-tRNA and P-site-bound deacylated tRNA move to the P and E sites, respectively. Catalyzes the coordinated movement of the two tRNA molecules, the mRNA and conformational changes in the ribosome. The polypeptide is Elongation factor G 2 (fusA2) (Borreliella afzelii (strain PKo) (Borrelia afzelii)).